We begin with the raw amino-acid sequence, 145 residues long: Fatty acid-binding protein homolog 4 (145 aa).

The protein belongs to the calycin superfamily. Fatty-acid binding protein (FABP) family.

In Caenorhabditis elegans, this protein is Fatty acid-binding protein homolog 4 (lbp-4).